We begin with the raw amino-acid sequence, 136 residues long: Protein PsiE homolog (136 aa).

Transmembrane regions (helical) follow at residues 15 to 35 (ILQT…VVFL), 55 to 75 (YELV…ALIV), 82 to 102 (FHFP…RLII), and 108 to 128 (PLDV…LWLC).

The protein belongs to the PsiE family.

The protein resides in the cell inner membrane. This is Protein PsiE homolog from Enterobacter sp. (strain 638).